The following is a 449-amino-acid chain: NADH-quinone oxidoreductase subunit H (449 aa).

Transmembrane regions (helical) follow at residues 29–49 (ILLK…FAIV), 96–116 (PIFI…FAVI), 136–156 (LPVS…GLIL), 177–197 (IISY…YAGT), 211–231 (WYIV…GETN), 259–279 (FFFL…TTLF), 298–318 (WVPL…FIWL), 330–350 (FMSF…LAVA), and 365–385 (WLVG…IDPG). Basic and acidic residues predominate over residues 393–402 (LEEAEQRKLA). The disordered stretch occupies residues 393–449 (LEEAEQRKLAEAPSLDRIPWPPPPQAAGRGRPAVSAGASANGSSTVIPADPGPRQER). Residues 418–436 (AAGRGRPAVSAGASANGSS) show a composition bias toward low complexity.

This sequence belongs to the complex I subunit 1 family. NDH-1 is composed of 14 different subunits. Subunits NuoA, H, J, K, L, M, N constitute the membrane sector of the complex.

The protein localises to the cell membrane. It carries out the reaction a quinone + NADH + 5 H(+)(in) = a quinol + NAD(+) + 4 H(+)(out). In terms of biological role, NDH-1 shuttles electrons from NADH, via FMN and iron-sulfur (Fe-S) centers, to quinones in the respiratory chain. The immediate electron acceptor for the enzyme in this species is believed to be ubiquinone. Couples the redox reaction to proton translocation (for every two electrons transferred, four hydrogen ions are translocated across the cytoplasmic membrane), and thus conserves the redox energy in a proton gradient. This subunit may bind ubiquinone. This is NADH-quinone oxidoreductase subunit H from Frankia casuarinae (strain DSM 45818 / CECT 9043 / HFP020203 / CcI3).